Consider the following 179-residue polypeptide: Enhancer of split m8 protein (179 aa).

Residues 10–65 (YQKVKKPMLERQRRARMNKCLDNLKTLVAELRGDDGILRMDKAEMLESAVIFMRQQ) form the bHLH domain. The Orange domain maps to 83–116 (FKNGYMNAVNEVSRVMASTPGMSVDLGKSVMTHL). A disordered region spans residues 146-179 (DKAPLSPASSGYHSDCDSPAPSPQPMQQPLWRPW). A WRPW motif motif is present at residues 176–179 (WRPW).

Homodimer. Heterodimers with dpn. Transcription repression requires formation of a complex with a corepressor protein (Groucho).

The protein resides in the nucleus. Its function is as follows. Participates in the control of cell fate choice by uncommitted neuroectodermal cells in the embryo. Transcriptional repressor. Binds DNA on N-box motifs: 5'-CACNAG-3'. Part of the Notch signaling pathway. This Drosophila melanogaster (Fruit fly) protein is Enhancer of split m8 protein.